We begin with the raw amino-acid sequence, 317 residues long: Exopolysaccharide production protein ExoZ (317 aa).

Transmembrane regions (helical) follow at residues Thr14–Ile34, Ile53–Phe73, Ile100–Phe120, Leu132–Asp152, Leu185–Leu205, Gly206–Leu226, and Ile268–Ile288.

Belongs to the acyltransferase 3 family.

It localises to the cell membrane. Its function is as follows. Required for the acetyl modification of the third sugar (glucose) of the octasaccharide subunit of succinoglycan (EPS I). This chain is Exopolysaccharide production protein ExoZ (exoZ), found in Rhizobium meliloti (strain 1021) (Ensifer meliloti).